The chain runs to 144 residues: Small ribosomal subunit protein uS12 (144 aa).

At Asp-103 the chain carries 3-methylthioaspartic acid. The segment at 121-144 is disordered; sequence VANRKQGRSKYGTKKASAVPAKKK.

It belongs to the universal ribosomal protein uS12 family. Part of the 30S ribosomal subunit. Contacts proteins S8 and S17. May interact with IF1 in the 30S initiation complex.

Its function is as follows. With S4 and S5 plays an important role in translational accuracy. Functionally, interacts with and stabilizes bases of the 16S rRNA that are involved in tRNA selection in the A site and with the mRNA backbone. Located at the interface of the 30S and 50S subunits, it traverses the body of the 30S subunit contacting proteins on the other side and probably holding the rRNA structure together. The combined cluster of proteins S8, S12 and S17 appears to hold together the shoulder and platform of the 30S subunit. This chain is Small ribosomal subunit protein uS12, found in Roseiflexus castenholzii (strain DSM 13941 / HLO8).